The following is a 188-amino-acid chain: mRNA transport factor GFD1 (188 aa).

Residues 1 to 128 (MPLESIWADA…KTQSKQDTAS (128 aa)) are disordered. The segment covering 18–28 (KQKPSHKRSNN) has biased composition (basic residues). Residues 29-44 (NKKNNNSRWSNESSSN) are compositionally biased toward low complexity. Over residues 59–79 (GNHESKTKNKIKETLPREKKP) the composition is skewed to basic and acidic residues. 3 positions are modified to phosphoserine: S87, S106, and S111. The span at 112–128 (PSKMKTTKTQSKQDTAS) shows a compositional bias: low complexity. The stretch at 119 to 164 (KTQSKQDTASKMKLLKKKIEEQREILQKTHHKNQQQQVLMDFLNDE) forms a coiled coil.

As to quaternary structure, interacts with GLE1, NUP42, NAB2, ZDS1 and probably DBP5. Forms a complex with GLE1 and NAB2.

The protein resides in the cytoplasm. The protein localises to the nucleus. Its subcellular location is the nuclear pore complex. It localises to the nucleus membrane. High-copy suppressor of mutant alleles of ATP-dependent RNA helicase DBP5, which is involved in mRNA export from the nucleus. It may also play an important role in a late stage of NAB2-mRNA export. The protein is mRNA transport factor GFD1 (GFD1) of Saccharomyces cerevisiae (strain ATCC 204508 / S288c) (Baker's yeast).